We begin with the raw amino-acid sequence, 23 residues long: MFFSSKKCKTVSKTFRGPCVRNA.

Belongs to the DEFL family. Group IV subfamily. Distributed in the epidermal cell layer of leaves and in the subepidermal layer region of stems. Not in roots.

The protein resides in the secreted. It is found in the cell wall. In terms of biological role, antimicrobial peptide. Active against Fusarium spp., Gram-positive and Gram-negative bacterial pathogens. This chain is Defensin D4, found in Spinacia oleracea (Spinach).